A 134-amino-acid chain; its full sequence is Phosphoribosyl-ATP pyrophosphatase 2 (134 aa).

It belongs to the PRA-PH family.

Its subcellular location is the cytoplasm. It catalyses the reaction 1-(5-phospho-beta-D-ribosyl)-ATP + H2O = 1-(5-phospho-beta-D-ribosyl)-5'-AMP + diphosphate + H(+). The protein operates within amino-acid biosynthesis; L-histidine biosynthesis; L-histidine from 5-phospho-alpha-D-ribose 1-diphosphate: step 2/9. The sequence is that of Phosphoribosyl-ATP pyrophosphatase 2 (hisE2) from Bradyrhizobium diazoefficiens (strain JCM 10833 / BCRC 13528 / IAM 13628 / NBRC 14792 / USDA 110).